Here is a 236-residue protein sequence, read N- to C-terminus: Small ribosomal subunit protein uS2c (236 aa).

This sequence belongs to the universal ribosomal protein uS2 family.

The protein localises to the plastid. The protein resides in the chloroplast. In Eucalyptus globulus subsp. globulus (Tasmanian blue gum), this protein is Small ribosomal subunit protein uS2c (rps2).